Here is a 159-residue protein sequence, read N- to C-terminus: MIYEFFNKNGYCTNNIPRKYIVKLKHNDDVKDFERYEFVTYTFRSFKYIYEMFYKKQKKVLHLEKIKEYLDERALAHWIMDDGGYTGAGIRIATNAFTLKEVMFLKELLEDKFKLKCTIQEIYIKDKWSIYITKDSMTHLISIIKPYMHPSMYYKLGIK.

It belongs to the LAGLIDADG endonuclease family.

Its subcellular location is the mitochondrion. In terms of biological role, mitochondrial DNA endonuclease involved in intron homing. The sequence is that of Intron-encoded endonuclease ai4 (ai4) from Dictyostelium discoideum (Social amoeba).